The primary structure comprises 608 residues: Developmental regulatory protein wetA (608 aa).

Disordered stretches follow at residues 54–88 (ADHHGHNPGMPTLADGLMLDHPSESTASASSGVST), 102–125 (VDATVPSQPGSSAAPGASHDVDPR), 146–186 (VSMS…MTRK), 202–226 (SKLRKPRKPIAMDRPGSPTMDNPPR), 309–352 (WPHQ…HAVP), 447–544 (AQTY…GDIG), and 556–576 (LMTGVAPSGSSKTKARREREA). 3 stretches are compositionally biased toward low complexity: residues 77–88 (ESTASASSGVST), 107–119 (PSQPGSSAAPGAS), and 163–175 (SSPGRRVPVSQPS). The span at 313 to 338 (QHPHPHPHPHHPQAHTHPHPHPHPHP) shows a compositional bias: basic residues. 2 stretches are compositionally biased toward low complexity: residues 339–350 (HQQAVAGHPQHA) and 502–517 (SSNGSVASARSASGRG).

This sequence belongs to the wetA family.

In terms of biological role, abaA and wetA are pivotal regulators of conidiophore development and conidium maturation. They act individually and together to regulate their own expression and that of numerous other sporulation-specific genes. Functions to maintain conidial dormancy by suppressing microcycle conidiation. In Gibberella zeae (strain ATCC MYA-4620 / CBS 123657 / FGSC 9075 / NRRL 31084 / PH-1) (Wheat head blight fungus), this protein is Developmental regulatory protein wetA.